The primary structure comprises 142 residues: Cytidine deaminase (142 aa).

Positions 9–139 (RQLEALKRAA…ELLPMAFGPS (131 aa)) constitute a CMP/dCMP-type deaminase domain. 50–52 (NVE) is a binding site for substrate. C61 is a Zn(2+) binding site. E63 functions as the Proton donor in the catalytic mechanism. C96 and C99 together coordinate Zn(2+).

It belongs to the cytidine and deoxycytidylate deaminase family. Homodimer. Zn(2+) is required as a cofactor.

It carries out the reaction cytidine + H2O + H(+) = uridine + NH4(+). It catalyses the reaction 2'-deoxycytidine + H2O + H(+) = 2'-deoxyuridine + NH4(+). Functionally, this enzyme scavenges exogenous and endogenous cytidine and 2'-deoxycytidine for UMP synthesis. The chain is Cytidine deaminase (CDD1) from Saccharomyces cerevisiae (strain ATCC 204508 / S288c) (Baker's yeast).